We begin with the raw amino-acid sequence, 313 residues long: tRNA dimethylallyltransferase (313 aa).

10–17 (GPTASGKT) is an ATP binding site. 12–17 (TASGKT) provides a ligand contact to substrate. Interaction with substrate tRNA stretches follow at residues 35-38 (DSAM), 159-163 (QRIQR), and 240-245 (RCVGYR).

It belongs to the IPP transferase family. In terms of assembly, monomer. Requires Mg(2+) as cofactor.

It carries out the reaction adenosine(37) in tRNA + dimethylallyl diphosphate = N(6)-dimethylallyladenosine(37) in tRNA + diphosphate. Its function is as follows. Catalyzes the transfer of a dimethylallyl group onto the adenine at position 37 in tRNAs that read codons beginning with uridine, leading to the formation of N6-(dimethylallyl)adenosine (i(6)A). The chain is tRNA dimethylallyltransferase from Legionella pneumophila subsp. pneumophila (strain Philadelphia 1 / ATCC 33152 / DSM 7513).